Here is a 153-residue protein sequence, read N- to C-terminus: NADPH-dependent 7-cyano-7-deazaguanine reductase (153 aa).

Cys51 acts as the Thioimide intermediate in catalysis. Asp58 serves as the catalytic Proton donor. Substrate contacts are provided by residues 73–75 (LES) and 92–93 (HE).

Belongs to the GTP cyclohydrolase I family. QueF type 1 subfamily.

Its subcellular location is the cytoplasm. The catalysed reaction is 7-aminomethyl-7-carbaguanine + 2 NADP(+) = 7-cyano-7-deazaguanine + 2 NADPH + 3 H(+). The protein operates within tRNA modification; tRNA-queuosine biosynthesis. Functionally, catalyzes the NADPH-dependent reduction of 7-cyano-7-deazaguanine (preQ0) to 7-aminomethyl-7-deazaguanine (preQ1). In Bradyrhizobium diazoefficiens (strain JCM 10833 / BCRC 13528 / IAM 13628 / NBRC 14792 / USDA 110), this protein is NADPH-dependent 7-cyano-7-deazaguanine reductase.